Consider the following 239-residue polypeptide: MINVLIIDDDAMVAELNRRYVAQIPGFQCCGTASTLEKAKEIIFNSDTPIDLILLDIYMQKENGLDLLPVLHNARCKSDVIVISSAADAVTIKDSLHYGVVDYLIKPFQASRFEEALTGWRQKKMALEKHQYYDQAELDQLIHGSSSNEQDPRRLPKGLTPQTLRTLCQWIDAHQDYEFSTDELANEVNISRVSCRKYLIWLVNCHILFTSIHYGVTGRPVYRYRIQAEHYSLLKQYCQ.

Residues 3–121 form the Response regulatory domain; that stretch reads NVLIIDDDAM…RFEEALTGWR (119 aa). A 4-aspartylphosphate modification is found at D56. Positions 181–200 form a DNA-binding region, H-T-H motif; the sequence is TDELANEVNISRVSCRKYLI.

In terms of processing, phosphorylated and activated by DcuS.

It localises to the cytoplasm. Its function is as follows. Member of the two-component regulatory system DcuR/DcuS. Involved in the C4-dicarboxylate-stimulated regulation of the genes encoding the anaerobic fumarate respiratory system (frdABCD; nuoAN; dcuB; dcuC; sdhCDAB; etc.). Weakly regulates the aerobic C4-dicarboxylate transporter dctA. This is Transcriptional regulatory protein DcuR (dcuR) from Escherichia coli O6:H1 (strain CFT073 / ATCC 700928 / UPEC).